The primary structure comprises 929 residues: Valine--tRNA ligase (929 aa).

The 'HIGH' region motif lies at 59–69 (PNVTGSLHMGH). The 'KMSKS' region signature appears at 557–561 (KMSKS). Lys560 provides a ligand contact to ATP. Positions 862–929 (LVDLDALRGR…LARQRLSDLG (68 aa)) form a coiled coil.

The protein belongs to the class-I aminoacyl-tRNA synthetase family. ValS type 1 subfamily. In terms of assembly, monomer.

The protein localises to the cytoplasm. The catalysed reaction is tRNA(Val) + L-valine + ATP = L-valyl-tRNA(Val) + AMP + diphosphate. Catalyzes the attachment of valine to tRNA(Val). As ValRS can inadvertently accommodate and process structurally similar amino acids such as threonine, to avoid such errors, it has a 'posttransfer' editing activity that hydrolyzes mischarged Thr-tRNA(Val) in a tRNA-dependent manner. The polypeptide is Valine--tRNA ligase (Prochlorococcus marinus (strain MIT 9313)).